The following is a 464-amino-acid chain: Glycine--tRNA ligase (464 aa).

Positions 104 and 175 each coordinate substrate. ATP-binding positions include Arg-207–Glu-209, Phe-217–Phe-222, Glu-292–Leu-293, and Gly-336–Arg-339. Phe-222 to Glu-226 is a substrate binding site. Glu-332–Gly-336 is a binding site for substrate.

Belongs to the class-II aminoacyl-tRNA synthetase family. Homodimer.

The protein localises to the cytoplasm. The enzyme catalyses tRNA(Gly) + glycine + ATP = glycyl-tRNA(Gly) + AMP + diphosphate. Its function is as follows. Catalyzes the attachment of glycine to tRNA(Gly). This is Glycine--tRNA ligase from Leptospira borgpetersenii serovar Hardjo-bovis (strain JB197).